A 58-amino-acid chain; its full sequence is Conotoxin TxXIIIA (58 aa).

An N-terminal signal peptide occupies residues Met-1–Ala-22. The propeptide occupies Glu-23 to Lys-46.

As to quaternary structure, homodimer; disulfide-linked. Post-translationally, 5 disulfide bonds are present in each homodimer: two intrachain disulfide bonds per subunit, and one interchain disulfide bond linking the two subunits. In terms of tissue distribution, expressed by the venom duct.

The protein resides in the secreted. The chain is Conotoxin TxXIIIA from Conus textile (Cloth-of-gold cone).